Here is a 472-residue protein sequence, read N- to C-terminus: Ribosomal protein uS12 methylthiotransferase RimO (472 aa).

In terms of domain architecture, MTTase N-terminal spans 33-143 (NRIGFVSLGC…VLKHVHKYVP (111 aa)). The [4Fe-4S] cluster site is built by C42, C78, C107, C175, C179, and C182. Positions 161 to 398 (LTPKHYAYLK…MEVQAEISAE (238 aa)) constitute a Radical SAM core domain. Residues 401–467 (ARFVGRTLDI…EHDLWAEVVD (67 aa)) enclose the TRAM domain.

It belongs to the methylthiotransferase family. RimO subfamily. [4Fe-4S] cluster serves as cofactor.

Its subcellular location is the cytoplasm. The catalysed reaction is L-aspartate(89)-[ribosomal protein uS12]-hydrogen + (sulfur carrier)-SH + AH2 + 2 S-adenosyl-L-methionine = 3-methylsulfanyl-L-aspartate(89)-[ribosomal protein uS12]-hydrogen + (sulfur carrier)-H + 5'-deoxyadenosine + L-methionine + A + S-adenosyl-L-homocysteine + 2 H(+). Functionally, catalyzes the methylthiolation of an aspartic acid residue of ribosomal protein uS12. In Shewanella baltica (strain OS195), this protein is Ribosomal protein uS12 methylthiotransferase RimO.